Consider the following 269-residue polypeptide: Putative hydro-lyase Aave_3512 (269 aa).

The protein belongs to the D-glutamate cyclase family.

The sequence is that of Putative hydro-lyase Aave_3512 from Paracidovorax citrulli (strain AAC00-1) (Acidovorax citrulli).